The primary structure comprises 163 residues: Lipoprotein signal peptidase (163 aa).

3 consecutive transmembrane segments (helical) span residues 8–28 (FFLL…YWVM), 61–81 (FSHW…LWLW), and 93–113 (FGFT…ICFY). Active-site residues include Asp117 and Asp136. A helical transmembrane segment spans residues 128-148 (YFAVFNLADTFITLGVIAIII).

This sequence belongs to the peptidase A8 family.

The protein localises to the cell inner membrane. The enzyme catalyses Release of signal peptides from bacterial membrane prolipoproteins. Hydrolyzes -Xaa-Yaa-Zaa-|-(S,diacylglyceryl)Cys-, in which Xaa is hydrophobic (preferably Leu), and Yaa (Ala or Ser) and Zaa (Gly or Ala) have small, neutral side chains.. It functions in the pathway protein modification; lipoprotein biosynthesis (signal peptide cleavage). In terms of biological role, this protein specifically catalyzes the removal of signal peptides from prolipoproteins. The protein is Lipoprotein signal peptidase of Bartonella henselae (strain ATCC 49882 / DSM 28221 / CCUG 30454 / Houston 1) (Rochalimaea henselae).